Reading from the N-terminus, the 163-residue chain is Photosystem II extrinsic protein V (163 aa).

The signal sequence occupies residues 1-26 (MFKTYSKSFACILFCIFNIFVVSASA). Positions 63, 66, 67, and 130 each coordinate heme c.

This sequence belongs to the cytochrome c family. PsbV subfamily. In terms of assembly, PSII is composed of 1 copy each of membrane proteins PsbA, PsbB, PsbC, PsbD, PsbE, PsbF, PsbH, PsbI, PsbJ, PsbK, PsbL, PsbM, PsbT, PsbY, PsbZ, Psb30/Ycf12, at least 3 peripheral proteins of the oxygen-evolving complex and a large number of cofactors. It forms dimeric complexes. The cofactor is heme c.

The protein resides in the plastid. It is found in the chloroplast thylakoid membrane. In terms of biological role, one of the extrinsic, lumenal subunits of photosystem II (PSII). PSII is a light-driven water plastoquinone oxidoreductase, using light energy to abstract electrons from H(2)O, generating a proton gradient subsequently used for ATP formation. The extrinsic proteins stabilize the structure of photosystem II oxygen-evolving complex (OEC), the ion environment of oxygen evolution and protect the OEC against heat-induced inactivation. In Thalassiosira pseudonana (Marine diatom), this protein is Photosystem II extrinsic protein V.